A 311-amino-acid chain; its full sequence is Glycosyltransferase 6 domain-containing protein 1 (311 aa).

Residues 1-5 (MKAKG) lie on the Cytoplasmic side of the membrane. The chain crosses the membrane as a helical; Signal-anchor for type II membrane protein span at residues 6–26 (RILLLTSCLFLLLLLLAKIHL). Residues 27–311 (RNHQEEELPL…KVAHYPTDDL (285 aa)) are Lumenal-facing. N-linked (GlcNAc...) asparagine glycosylation occurs at Asn77. Residues 85–90 (FAVSSF), 176–178 (SVN), and 198–201 (HAWW) each bind substrate. Glu266 (nucleophile) is an active-site residue.

The protein belongs to the glycosyltransferase 6 family. It depends on Mn(2+) as a cofactor.

Its subcellular location is the membrane. In Rattus norvegicus (Rat), this protein is Glycosyltransferase 6 domain-containing protein 1 (Glt6d1).